Consider the following 521-residue polypeptide: Cytochrome b5 reductase 4 (521 aa).

Residue Met-1 is modified to N-acetylmethionine. The span at Met-1–Val-18 shows a compositional bias: polar residues. A disordered region spans residues Met-1–Pro-27. Residues Leu-54 to Ala-130 form the Cytochrome b5 heme-binding domain. 2 residues coordinate heme: His-89 and His-112. A CS domain is found at Pro-165 to Gly-256. In terms of domain architecture, FAD-binding FR-type spans Leu-273 to Ser-385. Residues Asp-365–Gly-380 and Asp-392–Leu-424 contribute to the FAD site.

Belongs to the flavoprotein pyridine nucleotide cytochrome reductase family. FAD serves as cofactor. In terms of tissue distribution, widely expressed.

The protein localises to the endoplasmic reticulum. It catalyses the reaction 2 Fe(III)-[cytochrome b5] + NADH = 2 Fe(II)-[cytochrome b5] + NAD(+) + H(+). NADH-cytochrome b5 reductase involved in endoplasmic reticulum stress response pathway. Plays a critical role in protecting pancreatic beta-cells against oxidant stress, possibly by protecting the cell from excess buildup of reactive oxygen species (ROS). Reduces a variety of substrates in vitro, such as cytochrome c, feericyanide and methemoglobin. The polypeptide is Cytochrome b5 reductase 4 (Homo sapiens (Human)).